A 189-amino-acid chain; its full sequence is uncharacterized protein (189 aa).

4 helical membrane-spanning segments follow: residues 49 to 69 (LLGI…LFVF), 78 to 98 (LFHK…LSLF), 102 to 122 (LTIV…FPMI), and 124 to 144 (VSIA…LFPA). The segment at 165–189 (SSSAPDLNYPSLPTQSASPSQRFSA) is disordered.

It belongs to the chlamydial CPn_0442/CT_006/TC_0274 family.

The protein resides in the cell membrane. This is an uncharacterized protein from Chlamydia trachomatis serovar D (strain ATCC VR-885 / DSM 19411 / UW-3/Cx).